The following is a 138-amino-acid chain: Homeobox protein HD-11 (138 aa).

Positions 30–89 form a DNA-binding region, homeobox; the sequence is CTGKQMRKTRLQTCVLNRIFEISRFPSSKTIVDLALLINVHPKSIQKWFQNTRQAIRKKG.

It localises to the nucleus. This Encephalitozoon cuniculi (strain GB-M1) (Microsporidian parasite) protein is Homeobox protein HD-11 (HD-11).